We begin with the raw amino-acid sequence, 433 residues long: uncharacterized protein (433 aa).

The N-terminal stretch at 1-26 is a signal peptide; it reads MTRRAEFEMGLFVILQSMFLISLCSS. N59, N72, N125, N159, N210, N275, N282, and N323 each carry an N-linked (GlcNAc...) asparagine glycan. The GPI-anchor amidated alanine moiety is linked to residue A405. A propeptide spans 406-433 (removed in mature form); that stretch reads SSQPRLHDEGVTRLVIFVLSMLLVMLLS.

Its subcellular location is the cell membrane. This is an uncharacterized protein from Arabidopsis thaliana (Mouse-ear cress).